The sequence spans 231 residues: Lipoprotein-releasing system ATP-binding protein LolD (231 aa).

One can recognise an ABC transporter domain in the interval 11 to 231 (LRLEGLTRRF…TLRDGKLVPF (221 aa)). 47–54 (APSGTGKS) contacts ATP.

Belongs to the ABC transporter superfamily. Lipoprotein translocase (TC 3.A.1.125) family. As to quaternary structure, the complex is composed of two ATP-binding proteins (LolD) and two transmembrane proteins (LolC and LolE).

The protein localises to the cell inner membrane. Part of the ABC transporter complex LolCDE involved in the translocation of mature outer membrane-directed lipoproteins, from the inner membrane to the periplasmic chaperone, LolA. Responsible for the formation of the LolA-lipoprotein complex in an ATP-dependent manner. The protein is Lipoprotein-releasing system ATP-binding protein LolD of Gluconobacter oxydans (strain 621H) (Gluconobacter suboxydans).